The sequence spans 240 residues: Probable septum site-determining protein MinC (240 aa).

It belongs to the MinC family. Interacts with MinD and FtsZ.

Its function is as follows. Cell division inhibitor that blocks the formation of polar Z ring septums. Rapidly oscillates between the poles of the cell to destabilize FtsZ filaments that have formed before they mature into polar Z rings. Prevents FtsZ polymerization. The chain is Probable septum site-determining protein MinC from Aeromonas hydrophila subsp. hydrophila (strain ATCC 7966 / DSM 30187 / BCRC 13018 / CCUG 14551 / JCM 1027 / KCTC 2358 / NCIMB 9240 / NCTC 8049).